Here is a 249-residue protein sequence, read N- to C-terminus: Enolase-phosphatase E1 (249 aa).

Belongs to the HAD-like hydrolase superfamily. MasA/MtnC family. In terms of assembly, monomer. The cofactor is Mg(2+).

The catalysed reaction is 5-methylsulfanyl-2,3-dioxopentyl phosphate + H2O = 1,2-dihydroxy-5-(methylsulfanyl)pent-1-en-3-one + phosphate. The protein operates within amino-acid biosynthesis; L-methionine biosynthesis via salvage pathway; L-methionine from S-methyl-5-thio-alpha-D-ribose 1-phosphate: step 3/6. Its pathway is amino-acid biosynthesis; L-methionine biosynthesis via salvage pathway; L-methionine from S-methyl-5-thio-alpha-D-ribose 1-phosphate: step 4/6. Its function is as follows. Bifunctional enzyme that catalyzes the enolization of 2,3-diketo-5-methylthiopentyl-1-phosphate (DK-MTP-1-P) into the intermediate 2-hydroxy-3-keto-5-methylthiopentenyl-1-phosphate (HK-MTPenyl-1-P), which is then dephosphorylated to form the acireductone 1,2-dihydroxy-3-keto-5-methylthiopentene (DHK-MTPene). The protein is Enolase-phosphatase E1 of Pseudomonas aeruginosa (strain ATCC 15692 / DSM 22644 / CIP 104116 / JCM 14847 / LMG 12228 / 1C / PRS 101 / PAO1).